The primary structure comprises 122 residues: UPF0382 membrane protein SH2409 (122 aa).

4 helical membrane-spanning segments follow: residues 3 to 23, 46 to 66, 69 to 89, and 98 to 118; these read LFII…AFGA, MYHG…SINV, AGWL…ILAL, and ITPI…ISTF.

Belongs to the UPF0382 family.

The protein localises to the cell membrane. In Staphylococcus haemolyticus (strain JCSC1435), this protein is UPF0382 membrane protein SH2409.